The sequence spans 259 residues: Putative cysteine-rich repeat secretory protein 25 (259 aa).

The signal sequence occupies residues 1–31 (MSSSFLSRPLVSVYVFAMVTMQLLFMQSVLS). Gnk2-homologous domains follow at residues 37–138 (AYLN…SIYT) and 144–256 (YRHI…LYPF).

It belongs to the cysteine-rich repeat secretory protein family.

It localises to the secreted. In Arabidopsis thaliana (Mouse-ear cress), this protein is Putative cysteine-rich repeat secretory protein 25 (CRRSP25).